The chain runs to 507 residues: UDP-glycosyltransferase 73D1 (507 aa).

UDP-alpha-D-glucose contacts are provided by residues S298, 359 to 361, 376 to 384, and 398 to 401; these read SPQ, HCGWNSTIE, and FAEQ.

The protein belongs to the UDP-glycosyltransferase family.

The protein is UDP-glycosyltransferase 73D1 (UGT73D1) of Arabidopsis thaliana (Mouse-ear cress).